We begin with the raw amino-acid sequence, 95 residues long: YcgL domain-containing protein APJL_0712 (95 aa).

Positions 4–88 (HLCAIYKSPK…PPENLLKTFL (85 aa)) constitute a YcgL domain.

This Actinobacillus pleuropneumoniae serotype 3 (strain JL03) protein is YcgL domain-containing protein APJL_0712.